Reading from the N-terminus, the 515-residue chain is uncharacterized protein (515 aa).

The tract at residues 146–171 is disordered; the sequence is SSEVDRNSETEGTREENSNTSDWDEQ. Residues 148–162 are compositionally biased toward basic and acidic residues; the sequence is EVDRNSETEGTREEN.

It is found in the cytoplasm. The protein localises to the nucleus. This is an uncharacterized protein from Schizosaccharomyces pombe (strain 972 / ATCC 24843) (Fission yeast).